A 355-amino-acid polypeptide reads, in one-letter code: Holliday junction branch migration complex subunit RuvB (355 aa).

Residues 4 to 190 are large ATPase domain (RuvB-L); the sequence is TDKLAAERII…FGIVARLEFY (187 aa). ATP-binding positions include Leu29, Arg30, Gly71, Lys74, Thr75, Thr76, 137–139, Arg180, Tyr190, and Arg227; that span reads EDY. Residue Thr75 participates in Mg(2+) binding. Residues 191-261 form a small ATPAse domain (RuvB-S) region; the sequence is DADQLARIVR…VADAALAMLD (71 aa). The segment at 264-355 is head domain (RuvB-H); it reads PVGFDLMDRK…RGMWDTPAGK (92 aa). Residues Arg300, Arg319, and Arg324 each contribute to the DNA site.

This sequence belongs to the RuvB family. As to quaternary structure, homohexamer. Forms an RuvA(8)-RuvB(12)-Holliday junction (HJ) complex. HJ DNA is sandwiched between 2 RuvA tetramers; dsDNA enters through RuvA and exits via RuvB. An RuvB hexamer assembles on each DNA strand where it exits the tetramer. Each RuvB hexamer is contacted by two RuvA subunits (via domain III) on 2 adjacent RuvB subunits; this complex drives branch migration. In the full resolvosome a probable DNA-RuvA(4)-RuvB(12)-RuvC(2) complex forms which resolves the HJ.

Its subcellular location is the cytoplasm. The enzyme catalyses ATP + H2O = ADP + phosphate + H(+). Functionally, the RuvA-RuvB-RuvC complex processes Holliday junction (HJ) DNA during genetic recombination and DNA repair, while the RuvA-RuvB complex plays an important role in the rescue of blocked DNA replication forks via replication fork reversal (RFR). RuvA specifically binds to HJ cruciform DNA, conferring on it an open structure. The RuvB hexamer acts as an ATP-dependent pump, pulling dsDNA into and through the RuvAB complex. RuvB forms 2 homohexamers on either side of HJ DNA bound by 1 or 2 RuvA tetramers; 4 subunits per hexamer contact DNA at a time. Coordinated motions by a converter formed by DNA-disengaged RuvB subunits stimulates ATP hydrolysis and nucleotide exchange. Immobilization of the converter enables RuvB to convert the ATP-contained energy into a lever motion, pulling 2 nucleotides of DNA out of the RuvA tetramer per ATP hydrolyzed, thus driving DNA branch migration. The RuvB motors rotate together with the DNA substrate, which together with the progressing nucleotide cycle form the mechanistic basis for DNA recombination by continuous HJ branch migration. Branch migration allows RuvC to scan DNA until it finds its consensus sequence, where it cleaves and resolves cruciform DNA. This chain is Holliday junction branch migration complex subunit RuvB, found in Burkholderia ambifaria (strain ATCC BAA-244 / DSM 16087 / CCUG 44356 / LMG 19182 / AMMD) (Burkholderia cepacia (strain AMMD)).